We begin with the raw amino-acid sequence, 848 residues long: Crooked neck-like protein 1 (848 aa).

Thr2 carries the N-acetylalanine modification. The tract at residues 81–106 (RSSRTPHSTRCRKEDAQPGHHGNGAA) is disordered. 17 HAT repeats span residues 222-254 (DYKL…WEES), 256-288 (KEIQ…MEMK), 290-322 (RQVN…MEEM), 324-355 (GNVA…FELR), 357-388 (KEVD…FEEK), 390-425 (AYFA…FEEN), 427-461 (KEFE…FEKK), 471-503 (IIVS…LVES), 505-539 (AEAE…LWIN), 549-585 (KDPE…FEIR), 587-618 (KNLS…LELQ), 620-652 (REFD…LETI), 654-688 (GDID…FEIE), 690-721 (EETE…FELS), 726-767 (GSLT…EFGT), 769-807 (SDKE…YIFP), and 809-834 (DAAN…EKED). Residues 411-628 (MDEHLYVAFA…LREFDRCRKL (218 aa)) are mediates interaction with HSP90. Ser503 is modified (phosphoserine). The interval 827–848 (KQQQEKEDAEHHPDEDVDESES) is disordered. Over residues 828 to 840 (QQQEKEDAEHHPD) the composition is skewed to basic and acidic residues.

The protein belongs to the crooked-neck family. Identified in the spliceosome C complex. Present in a spliceosome complex assembled in vitro containing CRNKL1, HPRP8BP and SNRPB2. Component of the minor spliceosome, which splices U12-type introns. Isoform 2 seems to be predominant in the spliceosome complex. Interacts with PPIL2 (via the PPIase cyclophilin-type domain); they may form a trimeric complex with HSP90. In terms of tissue distribution, widely expressed. Highly expressed in testis. Not detected in brain and lung.

The protein resides in the nucleus. It localises to the nucleus speckle. Functionally, involved in pre-mRNA splicing process. As a component of the minor spliceosome, involved in the splicing of U12-type introns in pre-mRNAs. This is Crooked neck-like protein 1 (CRNKL1) from Homo sapiens (Human).